The sequence spans 353 residues: Phosphoribosylformylglycinamidine cyclo-ligase (353 aa).

The protein belongs to the AIR synthase family.

The protein resides in the cytoplasm. The catalysed reaction is 2-formamido-N(1)-(5-O-phospho-beta-D-ribosyl)acetamidine + ATP = 5-amino-1-(5-phospho-beta-D-ribosyl)imidazole + ADP + phosphate + H(+). It functions in the pathway purine metabolism; IMP biosynthesis via de novo pathway; 5-amino-1-(5-phospho-D-ribosyl)imidazole from N(2)-formyl-N(1)-(5-phospho-D-ribosyl)glycinamide: step 2/2. In Magnetococcus marinus (strain ATCC BAA-1437 / JCM 17883 / MC-1), this protein is Phosphoribosylformylglycinamidine cyclo-ligase.